The chain runs to 216 residues: RNA pyrophosphohydrolase (216 aa).

In terms of domain architecture, Nudix hydrolase spans 6–149 (GFRPNVGIIL…KRDVYQLALT (144 aa)). The Nudix box motif lies at 38-59 (GGIKYGETPMQAMYRELHEETG). Residues 159 to 188 (AQRTDKSRGPRAPRYPRVANGHAASEAPAA) form a disordered region.

The protein belongs to the Nudix hydrolase family. RppH subfamily. It depends on a divalent metal cation as a cofactor.

Its function is as follows. Accelerates the degradation of transcripts by removing pyrophosphate from the 5'-end of triphosphorylated RNA, leading to a more labile monophosphorylated state that can stimulate subsequent ribonuclease cleavage. This Burkholderia mallei (strain NCTC 10247) protein is RNA pyrophosphohydrolase.